We begin with the raw amino-acid sequence, 157 residues long: MKVAIYPGSFDPITNGHLDIIERASKMCDHLIVSVIHNPNKNPLFSLEERKLLIEECIGKYANVTVDCFSGLLMEYAKGKEATAIIKGLRAISDFEYELQMALMNQRLCPSIETVFLMTSTEYSFLSSSLIKEVAKFGGSIHGMVPANVYKAITNRF.

Substrate is bound at residue serine 9. ATP is bound by residues 9-10 (SF) and histidine 17. Substrate is bound by residues lysine 41, leucine 73, and lysine 87. Residues 88–90 (GLR), glutamate 98, and 123–129 (YSFLSSS) contribute to the ATP site.

The protein belongs to the bacterial CoaD family. Homohexamer. It depends on Mg(2+) as a cofactor.

It localises to the cytoplasm. It catalyses the reaction (R)-4'-phosphopantetheine + ATP + H(+) = 3'-dephospho-CoA + diphosphate. It participates in cofactor biosynthesis; coenzyme A biosynthesis; CoA from (R)-pantothenate: step 4/5. Reversibly transfers an adenylyl group from ATP to 4'-phosphopantetheine, yielding dephospho-CoA (dPCoA) and pyrophosphate. This chain is Phosphopantetheine adenylyltransferase, found in Alkaliphilus oremlandii (strain OhILAs) (Clostridium oremlandii (strain OhILAs)).